A 283-amino-acid polypeptide reads, in one-letter code: Bifunctional protein FolD (283 aa).

Residues glycine 166 to serine 168 and isoleucine 232 each bind NADP(+).

This sequence belongs to the tetrahydrofolate dehydrogenase/cyclohydrolase family. Homodimer.

The enzyme catalyses (6R)-5,10-methylene-5,6,7,8-tetrahydrofolate + NADP(+) = (6R)-5,10-methenyltetrahydrofolate + NADPH. It catalyses the reaction (6R)-5,10-methenyltetrahydrofolate + H2O = (6R)-10-formyltetrahydrofolate + H(+). Its pathway is one-carbon metabolism; tetrahydrofolate interconversion. Catalyzes the oxidation of 5,10-methylenetetrahydrofolate to 5,10-methenyltetrahydrofolate and then the hydrolysis of 5,10-methenyltetrahydrofolate to 10-formyltetrahydrofolate. The polypeptide is Bifunctional protein FolD (Mannheimia succiniciproducens (strain KCTC 0769BP / MBEL55E)).